The following is a 399-amino-acid chain: Enoyl-[acyl-carrier-protein] reductase [NADH] 2 (399 aa).

NAD(+) contacts are provided by residues 48-53 (GASSGF), 75-76 (FE), 112-113 (DA), and 141-142 (LA). Tyrosine 227 contacts substrate. Tyrosine 237 functions as the Proton donor in the catalytic mechanism. NAD(+) is bound by residues lysine 246 and 275–277 (LVT).

This sequence belongs to the TER reductase family. Monomer.

It carries out the reaction a 2,3-saturated acyl-[ACP] + NAD(+) = a (2E)-enoyl-[ACP] + NADH + H(+). The protein operates within lipid metabolism; fatty acid biosynthesis. Involved in the final reduction of the elongation cycle of fatty acid synthesis (FAS II). Catalyzes the reduction of a carbon-carbon double bond in an enoyl moiety that is covalently linked to an acyl carrier protein (ACP). The sequence is that of Enoyl-[acyl-carrier-protein] reductase [NADH] 2 from Vibrio parahaemolyticus serotype O3:K6 (strain RIMD 2210633).